The sequence spans 215 residues: Cytochrome b6 (215 aa).

Residues 32–52 (IFYCLGGITLTCFLVQVATGF) traverse the membrane as a helical segment. C35 contributes to the heme c binding site. 2 residues coordinate heme b: H86 and H100. Helical transmembrane passes span 90–110 (ASMM…TGGF), 116–136 (LTWV…VTGY), and 186–206 (LHTF…FSMI). Positions 187 and 202 each coordinate heme b.

The protein belongs to the cytochrome b family. PetB subfamily. In terms of assembly, the 4 large subunits of the cytochrome b6-f complex are cytochrome b6, subunit IV (17 kDa polypeptide, PetD), cytochrome f and the Rieske protein, while the 4 small subunits are PetG, PetL, PetM and PetN. The complex functions as a dimer. Requires heme b as cofactor. The cofactor is heme c.

Its subcellular location is the plastid. The protein localises to the chloroplast thylakoid membrane. In terms of biological role, component of the cytochrome b6-f complex, which mediates electron transfer between photosystem II (PSII) and photosystem I (PSI), cyclic electron flow around PSI, and state transitions. This Piper cenocladum (Ant piper) protein is Cytochrome b6.